The primary structure comprises 143 residues: Large ribosomal subunit protein uL11 (143 aa).

The protein belongs to the universal ribosomal protein uL11 family. Part of the ribosomal stalk of the 50S ribosomal subunit. Interacts with L10 and the large rRNA to form the base of the stalk. L10 forms an elongated spine to which L12 dimers bind in a sequential fashion forming a multimeric L10(L12)X complex. Post-translationally, one or more lysine residues are methylated.

Its function is as follows. Forms part of the ribosomal stalk which helps the ribosome interact with GTP-bound translation factors. The sequence is that of Large ribosomal subunit protein uL11 from Nitrosomonas eutropha (strain DSM 101675 / C91 / Nm57).